Here is a 339-residue protein sequence, read N- to C-terminus: Ketol-acid reductoisomerase (NADP(+)) (339 aa).

The KARI N-terminal Rossmann domain maps to 1-182; sequence MKVYYDSDAD…GGGRSGVIET (182 aa). Residues 24-27, R48, S51, S53, and 83-86 contribute to the NADP(+) site; these read YGSQ and DEHQ. Residue H108 is part of the active site. G134 serves as a coordination point for NADP(+). Positions 183-328 constitute a KARI C-terminal knotted domain; it reads TFREEVETDL…ARLRKMMPWI (146 aa). Positions 191, 195, 227, and 231 each coordinate Mg(2+). S252 provides a ligand contact to substrate.

The protein belongs to the ketol-acid reductoisomerase family. Requires Mg(2+) as cofactor.

It catalyses the reaction (2R)-2,3-dihydroxy-3-methylbutanoate + NADP(+) = (2S)-2-acetolactate + NADPH + H(+). It carries out the reaction (2R,3R)-2,3-dihydroxy-3-methylpentanoate + NADP(+) = (S)-2-ethyl-2-hydroxy-3-oxobutanoate + NADPH + H(+). The protein operates within amino-acid biosynthesis; L-isoleucine biosynthesis; L-isoleucine from 2-oxobutanoate: step 2/4. It functions in the pathway amino-acid biosynthesis; L-valine biosynthesis; L-valine from pyruvate: step 2/4. Involved in the biosynthesis of branched-chain amino acids (BCAA). Catalyzes an alkyl-migration followed by a ketol-acid reduction of (S)-2-acetolactate (S2AL) to yield (R)-2,3-dihydroxy-isovalerate. In the isomerase reaction, S2AL is rearranged via a Mg-dependent methyl migration to produce 3-hydroxy-3-methyl-2-ketobutyrate (HMKB). In the reductase reaction, this 2-ketoacid undergoes a metal-dependent reduction by NADPH to yield (R)-2,3-dihydroxy-isovalerate. The chain is Ketol-acid reductoisomerase (NADP(+)) from Zymomonas mobilis subsp. mobilis (strain ATCC 31821 / ZM4 / CP4).